Reading from the N-terminus, the 503-residue chain is MREANVYSEIVPHTVTAADIAAKRPAGIILSGGPSSVYEEGAPRLDEGIFELGVPVLGICYGFQVMAVALGGEVAKTGHREYGSTAVRVSAGARGGAGFLLDGQPGDQTVWMSHGDSVAKAPEGFDVLASTDDTPIAAFANDGRKLYGVQWHPEVKHSEHGQAVLENFLHRAAGIPADWNSGNVIADQVAAIRAQVGSGRVLCALSGGVDSAVAAALVHKAIGDQLVCVFVDHGLLRRDEARQVQEDYVSATGVRLITVDAEEQFLAALESVSDPEAKRKIIGREFIRVFERAQADLVAEAASEGDPIRFLVQGTLYPDVVESGGGAGTANIKSHHNVSGLPEDLQFELVEPLCTLFKDEVRAIGRELGLPEVIVGRQPFPGPGLGIRIVGDVTRERLDLLRDADAIVRAELTAAGLDSEIWQCPVVLLADVRSVGVQGDGRTYGHPIVLRPVSSEDAMTADWTRLPYHLLAKISNRITNEVEGVNRVVLDVTSKPPGTIEWE.

The 178-residue stretch at 1–178 (MREANVYSEI…LHRAAGIPAD (178 aa)) folds into the Glutamine amidotransferase type-1 domain. Cys60 serves as the catalytic Nucleophile. Catalysis depends on residues His152 and Glu154. In terms of domain architecture, GMPS ATP-PPase spans 179–377 (WNSGNVIADQ…LGLPEVIVGR (199 aa)). Position 206 to 212 (206 to 212 (SGGVDSA)) interacts with ATP.

In terms of assembly, homodimer.

It catalyses the reaction XMP + L-glutamine + ATP + H2O = GMP + L-glutamate + AMP + diphosphate + 2 H(+). The protein operates within purine metabolism; GMP biosynthesis; GMP from XMP (L-Gln route): step 1/1. In terms of biological role, catalyzes the synthesis of GMP from XMP. The chain is GMP synthase [glutamine-hydrolyzing] from Leifsonia xyli subsp. xyli (strain CTCB07).